Reading from the N-terminus, the 143-residue chain is MADVLFFEKPGCRNNTRQKALLIASGHRVEAHDIRQQPWTAETLRPYFGDKPVAQWINPAAPRVKAGEVRPEALDESEALALMVKDALLIRRPLMAVGQTKTCGFDRAAVNAWIGLIAQDPGDIETCPSQATNHRCAEEPGAA.

Cysteine 12 is a catalytic residue.

The protein belongs to the ArsC family.

This is an uncharacterized protein from Rhodospirillum rubrum.